The sequence spans 105 residues: Defensin-like protein (105 aa).

The signal sequence occupies residues 1–25 (MARSLCFMAFAILAMMLFVAYEVQA). Intrachain disulfides connect C28–C72, C39–C59, C45–C66, and C49–C68.

Belongs to the DEFL family. Flower. Found in petals, stamen and pistils, but not in sepals. In particular, accumulation in a configuration surrounding the inner reproductive whorls.

The protein resides in the secreted. It localises to the cell wall. The protein localises to the vacuole. In terms of biological role, involved in floral organogenesis. May play a protective role in flowers by protecting the reproductive organs from potential pathogen attack. The chain is Defensin-like protein (FST) from Nicotiana tabacum (Common tobacco).